The chain runs to 327 residues: Malate dehydrogenase (327 aa).

NAD(+) is bound at residue 11 to 17 (GAAGQIS). Positions 92 and 98 each coordinate substrate. NAD(+) contacts are provided by residues asparagine 105, glutamine 112, and 129 to 131 (VGN). The substrate site is built by asparagine 131 and arginine 162. Catalysis depends on histidine 187, which acts as the Proton acceptor.

This sequence belongs to the LDH/MDH superfamily. MDH type 2 family.

The enzyme catalyses (S)-malate + NAD(+) = oxaloacetate + NADH + H(+). Catalyzes the reversible oxidation of malate to oxaloacetate. This chain is Malate dehydrogenase, found in Teredinibacter turnerae (strain ATCC 39867 / T7901).